A 225-amino-acid chain; its full sequence is Small ribosomal subunit protein uS2 (225 aa).

The span at 1-14 (MAEAKPAPEKEAAA) shows a compositional bias: basic and acidic residues. The interval 1–33 (MAEAKPAPEKEAAAKTESVPVETEGEGPSVKEG) is disordered.

The protein belongs to the universal ribosomal protein uS2 family.

The protein is Small ribosomal subunit protein uS2 of Methanosarcina barkeri (strain Fusaro / DSM 804).